A 59-amino-acid chain; its full sequence is Small ribosomal subunit protein eS17 (59 aa).

This sequence belongs to the eukaryotic ribosomal protein eS17 family.

This is Small ribosomal subunit protein eS17 from Halobacterium salinarum (strain ATCC 29341 / DSM 671 / R1).